A 48-amino-acid polypeptide reads, in one-letter code: Large ribosomal subunit protein bL34c (48 aa).

Residues 18-48 (SGFRSRMATPQGRKTIRNRRKKGRKNLTLRR) form a disordered region. The segment covering 31–48 (KTIRNRRKKGRKNLTLRR) has biased composition (basic residues).

It belongs to the bacterial ribosomal protein bL34 family.

The protein resides in the plastid. It is found in the chloroplast. The polypeptide is Large ribosomal subunit protein bL34c (Phaeodactylum tricornutum (strain CCAP 1055/1)).